Consider the following 617-residue polypeptide: Hemagglutinin glycoprotein (617 aa).

Over 1–37 (MSPQRDRINAFYKDNPHPKGSRIVINREHLMIDRPYV) the chain is Intravirion. The segment at 1-154 (MSPQRDRINA…RIKLDYDQYC (154 aa)) is stalk. A helical; Signal-anchor for type II membrane protein membrane pass occupies residues 38–58 (LLAVLFVMFLSLIGLLAIAGI). Residues 59-617 (RLHRAAIYTA…VTREDGTNRR (559 aa)) lie on the Virion surface side of the membrane. N-linked (GlcNAc...) asparagine; by host glycans are attached at residues Asn-168, Asn-187, Asn-200, Asn-215, and Asn-238. 5 cysteine pairs are disulfide-bonded: Cys-188/Cys-606, Cys-287/Cys-300, Cys-381/Cys-494, Cys-386/Cys-394, and Cys-570/Cys-579. The segment at 458-543 (PMKNLALGVI…VEHAVVYYVY (86 aa)) is interaction with host NECTIN4 receptor.

Belongs to the paramyxoviruses hemagglutinin-neuraminidase family. Non-sialidase subfamily. In terms of assembly, homodimer; disulfide-linked. Further forms homotetramer (dimer of dimers). Interacts (via C-terminus) with human NECTIN4 (via N-terminus); this interaction allows attachment to the respiratory epithelium and viral entry. Interacts (via C-terminus) with human SLAMF1/CD150 (via N-terminus); this interaction allows attachment and viral entry into the CD150-expressing immune cells. Interacts with human CD46 antigen (via N-terminus); this interaction allows attachment and viral entry of vaccine and laboratory-adapted strains.

It is found in the virion membrane. Its subcellular location is the host cell membrane. Functionally, attaches the virus to the human SLAMF1/CD150 receptor for entry into host dendritic cells, macrophages, activated memory T cells and naive or memory B cells, thereby explaining the long immunosuppression that follows infection. In the respiratory airways, binds to the NECTIN4 receptor for entry into the host cell. Binding of H protein to the receptor induces a conformational change that allows the F protein to trigger virion/cell membranes fusion. The vaccine and laboratory-adapted strains use host CD46 as an alternate receptor. The high degree of interaction between H and CD46 results in down-regulation of the latter from the surface of infected cells, rendering them more sensitive to c3b-mediated complement lysis. This Measles virus (strain Edmonston) (MeV) protein is Hemagglutinin glycoprotein (H).